The following is a 417-amino-acid chain: Peptidyl-Asp metalloendopeptidase (417 aa).

The signal sequence occupies residues 1–25 (MLSRSIGKAAGGLVLGLSVAAAAHA). Histidine 327 serves as a coordination point for Zn(2+). Glutamate 328 is a catalytic residue. Residues histidine 331 and histidine 337 each coordinate Zn(2+).

Belongs to the peptidase M72 family. Zn(2+) is required as a cofactor.

The enzyme catalyses Cleavage of Xaa-|-Asp, Xaa-|-Glu and Xaa-|-cysteic acid bonds.. Functionally, metalloprotease, specifically cleaves on the N-terminal side of aspartyl, glutamyl and cysteic acid residues. The polypeptide is Peptidyl-Asp metalloendopeptidase (Stenotrophomonas maltophilia (strain R551-3)).